Reading from the N-terminus, the 493-residue chain is Catalase A (493 aa).

A disordered region spans residues 1-24 (MKRKLTGLFGAPVSDRENSMTAGP). Catalysis depends on residues H53 and N126. Y336 is a heme binding site.

This sequence belongs to the catalase family. Homodimer. Heme serves as cofactor.

The catalysed reaction is 2 H2O2 = O2 + 2 H2O. In terms of biological role, decomposes hydrogen peroxide into water and oxygen; serves to protect cells from the toxic effects of hydrogen peroxide. The sequence is that of Catalase A (katA) from Staphylococcus xylosus.